A 181-amino-acid chain; its full sequence is Large ribosomal subunit protein uL5 (181 aa).

Belongs to the universal ribosomal protein uL5 family. Part of the 50S ribosomal subunit; part of the 5S rRNA/L5/L18/L25 subcomplex. Contacts the 5S rRNA and the P site tRNA. Forms a bridge to the 30S subunit in the 70S ribosome.

This is one of the proteins that bind and probably mediate the attachment of the 5S RNA into the large ribosomal subunit, where it forms part of the central protuberance. In the 70S ribosome it contacts protein S13 of the 30S subunit (bridge B1b), connecting the 2 subunits; this bridge is implicated in subunit movement. Contacts the P site tRNA; the 5S rRNA and some of its associated proteins might help stabilize positioning of ribosome-bound tRNAs. The protein is Large ribosomal subunit protein uL5 of Helicobacter acinonychis (strain Sheeba).